A 1871-amino-acid polypeptide reads, in one-letter code: Plexin-A3 (1871 aa).

A signal peptide spans 1–19 (MPSVCLLLLLFLAVGGALG). One can recognise a Sema domain in the interval 20-488 (NRPFRAFVVT…SEKQVSQLPV (469 aa)). The Extracellular portion of the chain corresponds to 20 to 1220 (NRPFRAFVVT…SAERALTLPA (1201 aa)). N-linked (GlcNAc...) asparagine glycosylation occurs at Asn59. 9 disulfide bridges follow: Cys77–Cys86, Cys112–Cys120, Cys266–Cys387, Cys282–Cys338, Cys356–Cys375, Cys491–Cys508, Cys497–Cys539, Cys500–Cys517, and Cys511–Cys523. Residue Asn548 is glycosylated (N-linked (GlcNAc...) asparagine). Cys574 and Cys594 are oxidised to a cystine. 3 N-linked (GlcNAc...) asparagine glycosylation sites follow: Asn637, Asn738, and Asn746. 4 IPT/TIG domains span residues 840 to 933 (PRIT…YSFV), 935 to 1020 (PTFD…YTYT), 1023 to 1122 (PTVT…FTYY), and 1125 to 1211 (PSFE…LHIS). 5 N-linked (GlcNAc...) asparagine glycosylation sites follow: Asn1009, Asn1036, Asn1073, Asn1115, and Asn1162. Residues 1221-1241 (MMGLAAGGGLLLLAITAVLVA) traverse the membrane as a helical segment. Over 1242 to 1871 (YKRKTQDADR…QIISLVSSDS (630 aa)) the chain is Cytoplasmic. Ser1596 carries the phosphoserine modification.

Belongs to the plexin family. In terms of assembly, interacts with CBFA2T3/MTG16.

The protein localises to the cell membrane. In terms of biological role, coreceptor for SEMA3A and SEMA3F. Necessary for signaling by class 3 semaphorins and subsequent remodeling of the cytoskeleton. Plays a role in axon guidance in the developing nervous system. Regulates the migration of sympathetic neurons, but not of neural crest precursors. Required for normal dendrite spine morphology in pyramidal neurons. May play a role in regulating semaphorin-mediated programmed cell death in the developing nervous system. Class 3 semaphorins bind to a complex composed of a neuropilin and a plexin. The plexin modulates the affinity of the complex for specific semaphorins, and its cytoplasmic domain is required for the activation of down-stream signaling events in the cytoplasm. In Homo sapiens (Human), this protein is Plexin-A3 (PLXNA3).